Here is a 353-residue protein sequence, read N- to C-terminus: uncharacterized protein (353 aa).

Residues 69–106 (ISSATPSSTPPATRASSRLQPPKGHQAGGSNSQQQQPS) form a disordered region. Residues 70-86 (SSATPSSTPPATRASSR) show a composition bias toward low complexity. Residues 319 to 353 (GENKEKKMREMSRVYREMTRQMDDTRRDLDRLNQG) adopt a coiled-coil conformation.

This is an uncharacterized protein from Gibberella zeae (strain ATCC MYA-4620 / CBS 123657 / FGSC 9075 / NRRL 31084 / PH-1) (Wheat head blight fungus).